The sequence spans 563 residues: Arginine--tRNA ligase (563 aa).

The short motif at 121–131 (PNIAKPMSMGH) is the 'HIGH' region element.

The protein belongs to the class-I aminoacyl-tRNA synthetase family. Monomer.

The protein resides in the cytoplasm. The enzyme catalyses tRNA(Arg) + L-arginine + ATP = L-arginyl-tRNA(Arg) + AMP + diphosphate. The protein is Arginine--tRNA ligase of Leuconostoc mesenteroides subsp. mesenteroides (strain ATCC 8293 / DSM 20343 / BCRC 11652 / CCM 1803 / JCM 6124 / NCDO 523 / NBRC 100496 / NCIMB 8023 / NCTC 12954 / NRRL B-1118 / 37Y).